We begin with the raw amino-acid sequence, 388 residues long: Probable peptidoglycan glycosyltransferase FtsW (388 aa).

Residues 1-19 (MMSPSTSAPHNQPIQPELD) are Cytoplasmic-facing. The chain crosses the membrane as a helical span at residues 20–40 (VLLVSTVLLLLGLGLVMVYSA). Over 41 to 55 (SIAIAEAKFGEGSSY) the chain is Periplasmic. A helical membrane pass occupies residues 56-76 (YFLARQASYILAGIAVGIGCF). Topologically, residues 77–89 (RIPLRWWQAYSHY) are cytoplasmic. A helical membrane pass occupies residues 90–110 (LLGLGILLLLVVLIPGISHEI). Over 111–116 (NGSRRW) the chain is Periplasmic. A helical membrane pass occupies residues 117-137 (IPLGITSFQPSELMKLIILIF). Residues 138–151 (TADYVVRKAAFKDH) lie on the Cytoplasmic side of the membrane. Residues 152 to 172 (FFKGFLPILALLTIVSLLLLM) traverse the membrane as a helical segment. Over 173–175 (EPD) the chain is Periplasmic. A run of 2 helical transmembrane segments spans residues 176 to 196 (LGATVVIAAIVLSIMFMNGMS) and 197 to 217 (LKMFFGLICLVPVLLALLIII). At 218–284 (EPYRMDRINA…DFMFAVLAEE (67 aa)) the chain is on the periplasmic side. Residues 285–305 (LGFAGVVTVISLFFFLLVRIF) traverse the membrane as a helical segment. Topologically, residues 306–324 (KVGRTAARLGDQFGSLVAQ) are cytoplasmic. The chain crosses the membrane as a helical span at residues 325–345 (GIGVWLGLQAFINMGVNMGLL). The Periplasmic portion of the chain corresponds to 346–351 (PTKGLT). Residues 352 to 372 (LPFMSYGGSSIVINSIAIAIL) form a helical membrane-spanning segment. Residues 373 to 388 (LRIDWENRLKRRGLNA) are Cytoplasmic-facing.

This sequence belongs to the SEDS family. FtsW subfamily.

The protein localises to the cell inner membrane. It carries out the reaction [GlcNAc-(1-&gt;4)-Mur2Ac(oyl-L-Ala-gamma-D-Glu-L-Lys-D-Ala-D-Ala)](n)-di-trans,octa-cis-undecaprenyl diphosphate + beta-D-GlcNAc-(1-&gt;4)-Mur2Ac(oyl-L-Ala-gamma-D-Glu-L-Lys-D-Ala-D-Ala)-di-trans,octa-cis-undecaprenyl diphosphate = [GlcNAc-(1-&gt;4)-Mur2Ac(oyl-L-Ala-gamma-D-Glu-L-Lys-D-Ala-D-Ala)](n+1)-di-trans,octa-cis-undecaprenyl diphosphate + di-trans,octa-cis-undecaprenyl diphosphate + H(+). The protein operates within cell wall biogenesis; peptidoglycan biosynthesis. Functionally, peptidoglycan polymerase that is essential for cell division. The sequence is that of Probable peptidoglycan glycosyltransferase FtsW from Nitrosomonas europaea (strain ATCC 19718 / CIP 103999 / KCTC 2705 / NBRC 14298).